The following is a 99-amino-acid chain: Imizoquin biosynthesis cluster protein A (99 aa).

It functions in the pathway secondary metabolite biosynthesis. Its function is as follows. Part of the gene cluster that mediates the biosynthesis of imizoquins A to D, tripeptide-derived alkaloids that serve a protective role against oxidative stress that are essential for normal germination. ImqB is a canonical three-module NRPS that assembles the tripeptide backbone of the imizoquins via condensation of Trp, Tyr, and Leu-derived precursors. N-methylation by imqF and phenol oxidation by imqC, followed by cyclization via the FAD-dependent oxidase imqH carry out the three-step transformation of L-tyrosine into tetrahydroisoquinoline. Importantly, this sequence requires the presence of a free amine in the tyrosine moiety, indicating that isoquinoline formation occurs prior to peptide bond formation. The imidazolidin-4-one ring of imizoquins could form following additional oxidation of the methyl-derived bridgehead carbon by imqH. Lastly, O-methylation by imqG and leucine hydroxylation by imqE complete biosynthesis of the imizoquins. The protein is Imizoquin biosynthesis cluster protein A of Aspergillus flavus (strain ATCC 200026 / FGSC A1120 / IAM 13836 / NRRL 3357 / JCM 12722 / SRRC 167).